The chain runs to 167 residues: Interferon gamma (167 aa).

An N-terminal signal peptide occupies residues 1–23 (MSYTSYILAFQLCLILGSYGCYC). Residue glutamine 24 is modified to Pyrrolidone carboxylic acid. 3 N-linked (GlcNAc...) asparagine glycosylation sites follow: asparagine 41, asparagine 108, and asparagine 117.

This sequence belongs to the type II (or gamma) interferon family. In terms of assembly, homodimer. Interacts with IFNGR1 (via extracellular domain); this interaction promotes IFNGR1 dimerization. Released primarily from activated T lymphocytes.

The protein resides in the secreted. Type II interferon produced by immune cells such as T-cells and NK cells that plays crucial roles in antimicrobial, antiviral, and antitumor responses by activating effector immune cells and enhancing antigen presentation. Primarily signals through the JAK-STAT pathway after interaction with its receptor IFNGR1 to affect gene regulation. Upon IFNG binding, IFNGR1 intracellular domain opens out to allow association of downstream signaling components JAK2, JAK1 and STAT1, leading to STAT1 activation, nuclear translocation and transcription of IFNG-regulated genes. Many of the induced genes are transcription factors such as IRF1 that are able to further drive regulation of a next wave of transcription. Plays a role in class I antigen presentation pathway by inducing a replacement of catalytic proteasome subunits with immunoproteasome subunits. In turn, increases the quantity, quality, and repertoire of peptides for class I MHC loading. Increases the efficiency of peptide generation also by inducing the expression of activator PA28 that associates with the proteasome and alters its proteolytic cleavage preference. Up-regulates as well MHC II complexes on the cell surface by promoting expression of several key molecules such as cathepsins B/CTSB, H/CTSH, and L/CTSL. Participates in the regulation of hematopoietic stem cells during development and under homeostatic conditions by affecting their development, quiescence, and differentiation. In Oryctolagus cuniculus (Rabbit), this protein is Interferon gamma (IFNG).